The chain runs to 157 residues: Crossover junction endodeoxyribonuclease RuvC (157 aa).

Catalysis depends on residues Asp7, Glu67, and Asp140. Positions 7, 67, and 140 each coordinate Mg(2+).

Belongs to the RuvC family. In terms of assembly, homodimer which binds Holliday junction (HJ) DNA. The HJ becomes 2-fold symmetrical on binding to RuvC with unstacked arms; it has a different conformation from HJ DNA in complex with RuvA. In the full resolvosome a probable DNA-RuvA(4)-RuvB(12)-RuvC(2) complex forms which resolves the HJ. It depends on Mg(2+) as a cofactor.

Its subcellular location is the cytoplasm. The catalysed reaction is Endonucleolytic cleavage at a junction such as a reciprocal single-stranded crossover between two homologous DNA duplexes (Holliday junction).. Functionally, the RuvA-RuvB-RuvC complex processes Holliday junction (HJ) DNA during genetic recombination and DNA repair. Endonuclease that resolves HJ intermediates. Cleaves cruciform DNA by making single-stranded nicks across the HJ at symmetrical positions within the homologous arms, yielding a 5'-phosphate and a 3'-hydroxyl group; requires a central core of homology in the junction. The consensus cleavage sequence is 5'-(A/T)TT(C/G)-3'. Cleavage occurs on the 3'-side of the TT dinucleotide at the point of strand exchange. HJ branch migration catalyzed by RuvA-RuvB allows RuvC to scan DNA until it finds its consensus sequence, where it cleaves and resolves the cruciform DNA. The polypeptide is Crossover junction endodeoxyribonuclease RuvC (Rickettsia akari (strain Hartford)).